Here is a 257-residue protein sequence, read N- to C-terminus: Hydroxyacylglutathione hydrolase (257 aa).

Residues His58, His60, Asp62, His63, His116, Asp135, and His173 each contribute to the Zn(2+) site.

It belongs to the metallo-beta-lactamase superfamily. Glyoxalase II family. In terms of assembly, monomer. Zn(2+) serves as cofactor.

It carries out the reaction an S-(2-hydroxyacyl)glutathione + H2O = a 2-hydroxy carboxylate + glutathione + H(+). It participates in secondary metabolite metabolism; methylglyoxal degradation; (R)-lactate from methylglyoxal: step 2/2. Its function is as follows. Thiolesterase that catalyzes the hydrolysis of S-D-lactoyl-glutathione to form glutathione and D-lactic acid. This is Hydroxyacylglutathione hydrolase from Brucella melitensis biotype 1 (strain ATCC 23456 / CCUG 17765 / NCTC 10094 / 16M).